Here is a 326-residue protein sequence, read N- to C-terminus: MDLSATNHRIPLGDGNSIPIIGLGTYSEPKTTPKGSCATSVKIAIDTGYRHIDGAYIYQNEHEVGETFREKIAEGKVRREDIFYCGKLWATNHDPVMVRPTLERTLKVLKLDYIDLYIIEIPMAFKPGDVVYPRDENGKWLYHKTNLCATWEALEACKDAGLVKSLGVSNFNRQQLELLLNKPGLKHKPVCNQVECHPYFTQPKLLKFCQQHDIIIVAYSPLGTCRNPMWVNTSLPPLLKDTLLNSLGKKYKKTAAQIVLRFNVQRGVVVIPKSFNPERIKENFQIFDFSLTEEEMKDIEALNKNVRYVELLMWRDHPEYPFNDEY.

NADP(+) contacts are provided by residues 22-26 (GLGTY) and aspartate 53. Substrate is bound at residue tyrosine 26. Residues tyrosine 58, tryptophan 89, glutamate 120, and tyrosine 132 each contribute to the substrate site. The active-site Proton donor is tyrosine 58. NADP(+) contacts are provided by residues 169–170 (SN), glutamine 193, and 219–224 (YSPLGT). Tryptophan 230 is a substrate binding site. 273–283 (KSFNPERIKEN) is a binding site for NADP(+).

The protein belongs to the aldo/keto reductase family.

The protein resides in the cytoplasm. It catalyses the reaction 5beta-cholestan-3-one + NADP(+) = cholest-4-en-3-one + NADPH + H(+). The enzyme catalyses 4,5beta-dihydrocortisone + NADP(+) = cortisone + NADPH + H(+). It carries out the reaction cortisol + NADPH + H(+) = 5beta-dihydrocortisol + NADP(+). The catalysed reaction is corticosterone + NADPH + H(+) = 5beta-dihydrocorticosterone + NADP(+). It catalyses the reaction 7alpha,12alpha-dihydroxycholest-4-en-3-one + NADPH + H(+) = 7alpha,12alpha-dihydroxy-5beta-cholestan-3-one + NADP(+). The enzyme catalyses 7alpha-hydroxycholest-4-en-3-one + NADPH + H(+) = 7alpha-hydroxy-5beta-cholestan-3-one + NADP(+). It carries out the reaction epitestosterone + NADPH + H(+) = 5beta-dihydroepitestosterone + NADP(+). The catalysed reaction is androst-4-ene-3,17-dione + NADPH + H(+) = 5beta-androstane-3,17-dione + NADP(+). It catalyses the reaction progesterone + NADPH + H(+) = 5beta-pregnan-3,20-dione + NADP(+). The enzyme catalyses 21-hydroxyprogesterone + NADPH + H(+) = 5beta-dihydrodeoxycorticosterone + NADP(+). It carries out the reaction aldosterone + NADPH + H(+) = 5beta-dihydroaldosterone + NADP(+). The catalysed reaction is 17beta-hydroxyandrosta-1,4-dien-3-one + NADPH + H(+) = 17beta-hydroxy-5beta-androst-1-en-3-one + NADP(+). It catalyses the reaction 17beta-hydroxyestr-4-en-3-one + NADPH + H(+) = 17beta-hydroxy-5beta-estran-3-one + NADP(+). The enzyme catalyses 5beta-dihydrotestosterone + NADP(+) = testosterone + NADPH + H(+). It carries out the reaction androst-4-ene-3,11,17-trione + NADPH + H(+) = 17beta-hydroxyandrost-4-ene-3,11-dione + NADP(+). With respect to regulation, subject to inhibition by high substrate concentrations. Inhibited by testosterone concentrations above 10 uM. Inhibited by the primary and secondary bile acids chenodeoxycholic acid and ursodeoxycholic acid. In terms of biological role, catalyzes the stereospecific NADPH-dependent reduction of the C4-C5 double bond of bile acid intermediates and steroid hormones carrying a delta(4)-3-one structure to yield an A/B cis-ring junction. This cis-configuration is crucial for bile acid biosynthesis and plays important roles in steroid metabolism. Capable of reducing a broad range of delta-(4)-3-ketosteroids from C18 (such as, 17beta-hydroxyestr-4-en-3-one) to C27 (such as, 7alpha-hydroxycholest-4-en-3-one). In Oryctolagus cuniculus (Rabbit), this protein is Aldo-keto reductase family 1 member D1 (AKR1D1).